The sequence spans 481 residues: UDP-glycosyltransferase 71K2 (481 aa).

UDP-alpha-D-glucose contacts are provided by residues S285, 350–351 (WA), 368–376 (HCGWNSILE), and 390–393 (YAEQ).

The protein belongs to the UDP-glycosyltransferase family.

Functionally, glycosyltransferase that possesses chalcone and flavonol 2'-O-glycosyltransferase activity. Converts phloretin to phlorizin (phloretin 2'-O-glucoside), a potent antioxidant. Possesses glycosyltransferase activity toward quercetin, isoliquiritigenin, butein and caffeic acid. The protein is UDP-glycosyltransferase 71K2 of Pyrus communis (Pear).